A 154-amino-acid chain; its full sequence is Transcriptional repressor NrdR (154 aa).

A zinc finger lies at 3-34 (CPFCGANDTKVIDSRLVAEGEQVRRRRECLAC). In terms of domain architecture, ATP-cone spans 49-139 (PRLIKQDGSR…VYRRFQDLNE (91 aa)).

It belongs to the NrdR family. Zn(2+) serves as cofactor.

Negatively regulates transcription of bacterial ribonucleotide reductase nrd genes and operons by binding to NrdR-boxes. This Pseudomonas savastanoi pv. phaseolicola (strain 1448A / Race 6) (Pseudomonas syringae pv. phaseolicola (strain 1448A / Race 6)) protein is Transcriptional repressor NrdR.